We begin with the raw amino-acid sequence, 340 residues long: S-adenosylmethionine:tRNA ribosyltransferase-isomerase (340 aa).

Belongs to the QueA family. As to quaternary structure, monomer.

It is found in the cytoplasm. The catalysed reaction is 7-aminomethyl-7-carbaguanosine(34) in tRNA + S-adenosyl-L-methionine = epoxyqueuosine(34) in tRNA + adenine + L-methionine + 2 H(+). The protein operates within tRNA modification; tRNA-queuosine biosynthesis. In terms of biological role, transfers and isomerizes the ribose moiety from AdoMet to the 7-aminomethyl group of 7-deazaguanine (preQ1-tRNA) to give epoxyqueuosine (oQ-tRNA). This is S-adenosylmethionine:tRNA ribosyltransferase-isomerase from Aliarcobacter butzleri (strain RM4018) (Arcobacter butzleri).